We begin with the raw amino-acid sequence, 236 residues long: MIDMDEKLRILLCEDDENLGMLLREYLQAKGYSAELYPDGEAGFKAFLKNKYDLCVFDVMMPKKDGFTLAQEVRAANAEIPIIFLTAKTLKEDILEGFKIGADDYITKPFSMEELTFRIEAILRRVRGKKNKESNVYKIGKFTFDTQKQILAIGDKQTKLTTKESELLGLLCAHANEILQRDFALKTIWIDDNYFNARSMDVYITKLRKHLKDDDSIEIINIHGKGYKLITPEPES.

The Response regulatory domain occupies 9 to 123 (RILLCEDDEN…ELTFRIEAIL (115 aa)). Aspartate 58 is modified (4-aspartylphosphate). A DNA-binding region (ompR/PhoB-type) is located at residues 134-231 (SNVYKIGKFT…IHGKGYKLIT (98 aa)).

Phosphorylated by RprX.

The protein resides in the cytoplasm. Functionally, member of the two-component regulatory system RprX/RprY. This Bacteroides fragilis (strain YCH46) protein is Transcriptional regulatory protein RprY (rprY).